A 621-amino-acid chain; its full sequence is Cryptochrome-1 (621 aa).

The 130-residue stretch at 3–132 (VNAVHWFRKG…EVIVRISHTL (130 aa)) folds into the Photolyase/cryptochrome alpha/beta domain. 3 consecutive short sequence motifs (LIR) follow at residues 50–54 (NRWRF), 82–87 (DVFPRL), and 151–156 (KRFQTL). Serine 252 serves as a coordination point for FAD. Short sequence motifs (LIR) lie at residues 255-260 (LRFGCL), 271-276 (DLYKKV), 285-290 (SLYGQL), and 335-339 (TGFPW). Residue glutamine 289 coordinates FAD. Residue histidine 355 participates in FAD binding. An LIR 8 motif is present at residues 379 to 384 (KVFEEL). 387–389 (DAD) is an FAD binding site. 5 consecutive short sequence motifs (LIR) follow at residues 395–400 (GSWMWL), 411–416 (HCYCPV), 430–435 (RRYLPV), 486–491 (QIYQQL), and 492–497 (SRYRGL). The segment at 581 to 621 (QSHLMQPGRASLGTGISAGKRPNPEEETQSVGPKVQRQSTN) is disordered.

This sequence belongs to the DNA photolyase class-1 family. As to quaternary structure, component of the circadian core oscillator, which includes the CRY proteins, CLOCK or NPAS2, BMAL1 or BMAL2, CSNK1E, and the PER proteins. FAD serves as cofactor. Requires (6R)-5,10-methylene-5,6,7,8-tetrahydrofolate as cofactor. As to expression, expressed in the pineal gland.

It localises to the cytoplasm. The protein resides in the nucleus. In terms of biological role, transcriptional repressor which forms a core component of the circadian clock. The circadian clock, an internal time-keeping system, regulates various physiological processes through the generation of approximately 24 hour circadian rhythms in gene expression, which are translated into rhythms in metabolism and behavior. It is derived from the Latin roots 'circa' (about) and 'diem' (day) and acts as an important regulator of a wide array of physiological functions including metabolism, sleep, body temperature, blood pressure, endocrine, immune, cardiovascular, and renal function. Consists of two major components: the central clock, residing in the suprachiasmatic nucleus (SCN) of the brain, and the peripheral clocks that are present in nearly every tissue and organ system. Both the central and peripheral clocks can be reset by environmental cues, also known as Zeitgebers (German for 'timegivers'). The predominant Zeitgeber for the central clock is light, which is sensed by retina and signals directly to the SCN. The central clock entrains the peripheral clocks through neuronal and hormonal signals, body temperature and feeding-related cues, aligning all clocks with the external light/dark cycle. Circadian rhythms allow an organism to achieve temporal homeostasis with its environment at the molecular level by regulating gene expression to create a peak of protein expression once every 24 hours to control when a particular physiological process is most active with respect to the solar day. Transcription and translation of core clock components (CLOCK, NPAS2, BMAL1, BMAL2, PER1, PER2, PER3, CRY1 and CRY2) plays a critical role in rhythm generation, whereas delays imposed by post-translational modifications (PTMs) are important for determining the period (tau) of the rhythms (tau refers to the period of a rhythm and is the length, in time, of one complete cycle). A diurnal rhythm is synchronized with the day/night cycle, while the ultradian and infradian rhythms have a period shorter and longer than 24 hours, respectively. Disruptions in the circadian rhythms contribute to the pathology of cardiovascular diseases, cancer, metabolic syndromes and aging. A transcription/translation feedback loop (TTFL) forms the core of the molecular circadian clock mechanism. Transcription factors, CLOCK or NPAS2 and BMAL1 or BMAL2, form the positive limb of the feedback loop, act in the form of a heterodimer and activate the transcription of core clock genes and clock-controlled genes (involved in key metabolic processes), harboring E-box elements (5'-CACGTG-3') within their promoters. The core clock genes: PER1/2/3 and CRY1/2 which are transcriptional repressors form the negative limb of the feedback loop and interact with the CLOCK|NPAS2-BMAL1|BMAL2 heterodimer inhibiting its activity and thereby negatively regulating their own expression. This heterodimer also activates nuclear receptors NR1D1/2 and RORA/B/G, which form a second feedback loop and which activate and repress BMAL1 transcription, respectively. CRY1 and CRY2 have redundant functions but also differential and selective contributions at least in defining the pace of the SCN circadian clock and its circadian transcriptional outputs. More potent transcriptional repressor in cerebellum and liver than CRY2, though more effective in lengthening the period of the SCN oscillator. On its side, CRY2 seems to play a critical role in tuning SCN circadian period by opposing the action of CRY1. With CRY2, is dispensable for circadian rhythm generation but necessary for the development of intercellular networks for rhythm synchrony. Capable of translocating circadian clock core proteins such as PER proteins to the nucleus. Interacts with CLOCK-BMAL1 independently of PER proteins and is found at CLOCK-BMAL1-bound sites, suggesting that CRY may act as a molecular gatekeeper to maintain CLOCK-BMAL1 in a poised and repressed state until the proper time for transcriptional activation. Represses CLOCK-BMAL1-mediated transcriptional activation. The polypeptide is Cryptochrome-1 (CRY1) (Gallus gallus (Chicken)).